Consider the following 176-residue polypeptide: ATP-dependent protease subunit HslV (176 aa).

Threonine 2 is an active-site residue. The Na(+) site is built by glycine 157, cysteine 160, and threonine 163.

It belongs to the peptidase T1B family. HslV subfamily. As to quaternary structure, a double ring-shaped homohexamer of HslV is capped on each side by a ring-shaped HslU homohexamer. The assembly of the HslU/HslV complex is dependent on binding of ATP.

It is found in the cytoplasm. It catalyses the reaction ATP-dependent cleavage of peptide bonds with broad specificity.. Allosterically activated by HslU binding. Functionally, protease subunit of a proteasome-like degradation complex believed to be a general protein degrading machinery. In Enterobacter sp. (strain 638), this protein is ATP-dependent protease subunit HslV.